The following is a 1202-amino-acid chain: DNA polymerase beta (1202 aa).

Repeat copies occupy residues 1071-1074 (AGNP), 1075-1078 (AGNP), and 1079-1082 (AGNA). Residues 1071 to 1082 (AGNPAGNPAGNA) are 3 X 4 AA tandem repeats of A-G-[NK]-[PA].

Belongs to the DNA polymerase type-B family.

The enzyme catalyses DNA(n) + a 2'-deoxyribonucleoside 5'-triphosphate = DNA(n+1) + diphosphate. Its function is as follows. DNA-directed DNA polymerase involved in viral DNA replication. The chain is DNA polymerase beta (DPOL) from Ornithodoros (relapsing fever ticks).